A 75-amino-acid polypeptide reads, in one-letter code: uncharacterized protein (75 aa).

One can recognise a Glutaredoxin domain in the interval 1-75 (MIKIYSTPTC…KAEIDKLIEK (75 aa)). Cysteine 10 and cysteine 13 are joined by a disulfide.

Belongs to the glutaredoxin family.

This is an uncharacterized protein from Clostridium pasteurianum.